A 239-amino-acid chain; its full sequence is tRNA (guanine-N(7)-)-methyltransferase (239 aa).

S-adenosyl-L-methionine-binding residues include Glu-69, Glu-94, Asp-121, and Asp-144. Residue Asp-144 is part of the active site. Lys-148 is a binding site for substrate. The segment at 150-155 is interaction with RNA; the sequence is RHNKRR. Substrate is bound by residues Asp-180 and 217–220; that span reads TKFE.

Belongs to the class I-like SAM-binding methyltransferase superfamily. TrmB family. Monomer.

It catalyses the reaction guanosine(46) in tRNA + S-adenosyl-L-methionine = N(7)-methylguanosine(46) in tRNA + S-adenosyl-L-homocysteine. The protein operates within tRNA modification; N(7)-methylguanine-tRNA biosynthesis. In terms of biological role, catalyzes the formation of N(7)-methylguanine at position 46 (m7G46) in tRNA. This is tRNA (guanine-N(7)-)-methyltransferase from Escherichia coli O6:H1 (strain CFT073 / ATCC 700928 / UPEC).